Here is a 628-residue protein sequence, read N- to C-terminus: Probable potassium transport system protein Kup (628 aa).

11 consecutive transmembrane segments (helical) span residues I56–I76, L109–I129, A141–F161, F174–I194, A209–L229, W253–L273, L295–F315, I343–F363, A372–I392, W400–A420, and I425–T445.

It belongs to the HAK/KUP transporter (TC 2.A.72) family.

The protein resides in the cell inner membrane. The enzyme catalyses K(+)(in) + H(+)(in) = K(+)(out) + H(+)(out). Functionally, transport of potassium into the cell. Likely operates as a K(+):H(+) symporter. The polypeptide is Probable potassium transport system protein Kup (Methylibium petroleiphilum (strain ATCC BAA-1232 / LMG 22953 / PM1)).